A 389-amino-acid polypeptide reads, in one-letter code: PqqA peptide cyclase (389 aa).

Residues 20–235 enclose the Radical SAM core domain; that stretch reads VGLPLWLLAE…TNEYRARLEA (216 aa). [4Fe-4S] cluster-binding residues include Cys34, Cys38, and Cys41.

It belongs to the radical SAM superfamily. PqqE family. In terms of assembly, interacts with PqqD. The interaction is necessary for activity of PqqE. [4Fe-4S] cluster is required as a cofactor.

It carries out the reaction [PQQ precursor protein] + S-adenosyl-L-methionine = E-Y cross-linked-[PQQ precursor protein] + 5'-deoxyadenosine + L-methionine + H(+). It participates in cofactor biosynthesis; pyrroloquinoline quinone biosynthesis. In terms of biological role, catalyzes the cross-linking of a glutamate residue and a tyrosine residue in the PqqA protein as part of the biosynthesis of pyrroloquinoline quinone (PQQ). The sequence is that of PqqA peptide cyclase from Pseudomonas fluorescens (strain ATCC BAA-477 / NRRL B-23932 / Pf-5).